The chain runs to 115 residues: uncharacterized protein (115 aa).

The protein belongs to the transposase 34 family.

This is an uncharacterized protein from Sinorhizobium fredii (strain NBRC 101917 / NGR234).